Consider the following 60-residue polypeptide: Small ribosomal subunit protein bS21 (60 aa).

The segment at 41–60 (PEEKRKRKAIARRRQRSRRR) is disordered. A compositionally biased stretch (basic residues) spans 45–60 (RKRKAIARRRQRSRRR).

This sequence belongs to the bacterial ribosomal protein bS21 family.

The chain is Small ribosomal subunit protein bS21 from Gloeothece citriformis (strain PCC 7424) (Cyanothece sp. (strain PCC 7424)).